The primary structure comprises 139 residues: ATP synthase epsilon chain, chloroplastic (139 aa).

The protein belongs to the ATPase epsilon chain family. In terms of assembly, F-type ATPases have 2 components, CF(1) - the catalytic core - and CF(0) - the membrane proton channel. CF(1) has five subunits: alpha(3), beta(3), gamma(1), delta(1), epsilon(1). CF(0) has three main subunits: a, b and c.

Its subcellular location is the plastid. It is found in the chloroplast thylakoid membrane. Its function is as follows. Produces ATP from ADP in the presence of a proton gradient across the membrane. This is ATP synthase epsilon chain, chloroplastic from Welwitschia mirabilis (Tree tumbo).